Here is a 612-residue protein sequence, read N- to C-terminus: Chaperone protein DnaK (612 aa).

Residue Thr173 is modified to Phosphothreonine; by autocatalysis. Positions 524–544 (DDKVSEEDKQKAESAKDELKQ) are enriched in basic and acidic residues. Disordered regions lie at residues 524–560 (DDKVSEEDKQKAESAKDELKQALESGDMEQVKAKKDA) and 572–612 (LYEQ…DDKK). Over residues 574-586 (EQVQQEAQQASGE) the composition is skewed to low complexity. Positions 587 to 612 (QGEESGNQDDDVVDADYSEVDDDDKK) are enriched in acidic residues.

Belongs to the heat shock protein 70 family.

Acts as a chaperone. The polypeptide is Chaperone protein DnaK (Oceanobacillus iheyensis (strain DSM 14371 / CIP 107618 / JCM 11309 / KCTC 3954 / HTE831)).